Reading from the N-terminus, the 346-residue chain is HLA class I histocompatibility antigen, alpha chain F (346 aa).

Residues 1 to 21 form the signal peptide; sequence MAPRSLLLLLSGALALTDTWA. The interval 22–111 is alpha-1; sequence GSHSLRYFST…LLRRYNQSEA (90 aa). Residues 22–305 are Extracellular-facing; the sequence is GSHSLRYFST…EQSPQPTIPI (284 aa). 2 residues coordinate a peptide antigen: asparagine 91 and arginine 105. An N-linked (GlcNAc...) asparagine glycan is attached at asparagine 107. The tract at residues 112-203 is alpha-2; the sequence is GSHTLQGMNG…ENGKETLQRA (92 aa). Disulfide bonds link cysteine 122–cysteine 185 and cysteine 224–cysteine 280. A peptide antigen-binding residues include threonine 164, tyrosine 168, and glutamate 176. Positions 204-295 are alpha-3; that stretch reads DPPKAHVAHH…GLPQPLILRW (92 aa). The region spanning 206-296 is the Ig-like C1-type domain; sequence PKAHVAHHPI…LPQPLILRWE (91 aa). A connecting peptide region spans residues 296 to 305; it reads EQSPQPTIPI. A helical membrane pass occupies residues 306–329; sequence VGIVAGLVVLGAVVTGAVVAAVMW. Residues 330–346 are Cytoplasmic-facing; it reads RKKSSDRNRGSYSQAAV. The Sorting signal sequence; Golgi-retention signal; ER-retention signal signature appears at 336–338; sequence RNR.

Belongs to the MHC class I family. As to quaternary structure, forms a heterotrimer with B2M and a self-peptide. Binds a diverse number of peptides ranging from 7 to more than 30 amino acids. Peptide-bound HLA-F-B2M interacts with LILRB1 and LILRB2 but not with KIR3DS1 or KIR3DL2; this interaction is direct. The OC form interacts with KIR3DS1, KIR2DS4 and KIR3DL2; this interaction is direct. Interacts with TAP1-TAP2 complex and CALR; this interaction is required for appropriate folding and peptide loading. Interacts with the coat protein complex II and 14-3-3 proteins; these interactions likely control the anterograde ER-to-Golgi transport of HLA-F. HLA-F-B2M complex interacts with the heavy chain of other MHC class I molecules including HLA-A and HLA-E; this interaction may regulate the intracellular trafficking and the stability of peptide-free MHC class I OCs. Post-translationally, N-glycosylated. Expressed in resting B cells (at protein level). Expressed in secondary lymphoid organs rich in B and T cells such as the tonsils, spleen, and thymus (at protein level). Expressed in the endothelial cells of the tonsils. Expressed on activated lymphoid cells including B cells, NK cells, CD4+ T cells and memory T cells (at protein level). Expressed in motor neurons of spinal cord.

It is found in the cell membrane. The protein resides in the early endosome membrane. Its subcellular location is the lysosome membrane. In terms of biological role, non-classical major histocompatibility class Ib molecule postulated to play a role in immune surveillance, immune tolerance and inflammation. Functions in two forms, as a heterotrimeric complex with B2M/beta-2 microglobulin and a peptide (peptide-bound HLA-F-B2M) and as an open conformer (OC) devoid of peptide and B2M (peptide-free OC). In complex with B2M, presents non-canonical self-peptides carrying post-translational modifications, particularly phosphorylated self-peptides. Peptide-bound HLA-F-B2M acts as a ligand for LILRB1 inhibitory receptor, a major player in maternal-fetal tolerance. Peptide-free OC acts as a ligand for KIR3DS1 and KIR3DL2 receptors. Upon interaction with activating KIR3DS1 receptor on NK cells, triggers NK cell degranulation and anti-viral cytokine production. Through interaction with KIR3DL2 receptor, inhibits NK and T cell effector functions. May interact with other MHC class I OCs to cross-present exogenous viral, tumor or minor histompatibility antigens to cytotoxic CD8+ T cells, triggering effector and memory responses. May play a role in inflammatory responses in the peripheral nervous system. Through interaction with KIR3DL2, may protect motor neurons from astrocyte-induced toxicity. In Homo sapiens (Human), this protein is HLA class I histocompatibility antigen, alpha chain F.